Here is a 344-residue protein sequence, read N- to C-terminus: tRNA N6-adenosine threonylcarbamoyltransferase (344 aa).

Residues His113 and His117 each contribute to the Fe cation site. Residues Leu135–Gly139, Asp169, Gly182, Asp186, and Asn278 contribute to the substrate site. Asp306 provides a ligand contact to Fe cation. A disordered region spans residues Glu325–Phe344. The span at Ser326–Phe344 shows a compositional bias: polar residues.

It belongs to the KAE1 / TsaD family. Requires Fe(2+) as cofactor.

It localises to the cytoplasm. The catalysed reaction is L-threonylcarbamoyladenylate + adenosine(37) in tRNA = N(6)-L-threonylcarbamoyladenosine(37) in tRNA + AMP + H(+). Required for the formation of a threonylcarbamoyl group on adenosine at position 37 (t(6)A37) in tRNAs that read codons beginning with adenine. Is involved in the transfer of the threonylcarbamoyl moiety of threonylcarbamoyl-AMP (TC-AMP) to the N6 group of A37, together with TsaE and TsaB. TsaD likely plays a direct catalytic role in this reaction. The protein is tRNA N6-adenosine threonylcarbamoyltransferase of Corynebacterium glutamicum (strain R).